A 455-amino-acid chain; its full sequence is ATP-dependent protease ATPase subunit HslU (455 aa).

ATP is bound by residues I19, G61–E66, D268, E333, and R405.

It belongs to the ClpX chaperone family. HslU subfamily. As to quaternary structure, a double ring-shaped homohexamer of HslV is capped on each side by a ring-shaped HslU homohexamer. The assembly of the HslU/HslV complex is dependent on binding of ATP.

Its subcellular location is the cytoplasm. In terms of biological role, ATPase subunit of a proteasome-like degradation complex; this subunit has chaperone activity. The binding of ATP and its subsequent hydrolysis by HslU are essential for unfolding of protein substrates subsequently hydrolyzed by HslV. HslU recognizes the N-terminal part of its protein substrates and unfolds these before they are guided to HslV for hydrolysis. The chain is ATP-dependent protease ATPase subunit HslU from Francisella philomiragia subsp. philomiragia (strain ATCC 25017 / CCUG 19701 / FSC 153 / O#319-036).